A 33-amino-acid chain; its full sequence is U1-pseudomyrmecitoxin-Pt1 subunit LS1 (33 aa).

Belongs to the myrmexin family. Heterodimer composed of subunit LS1 and subunit SS1 (U1-PSDTX-Pt1b), heterodimer composed of subunit LS1 and SS2 (U1-PSDTX-Pt1b), and heterodimer composed of subunit LS1 and SS3; disulfide-linked. As to expression, expressed by the venom gland.

It is found in the secreted. This heterodimer may have anti-inflammatory properties, since the myrmexin complex (composed of 6 SS-LS heterodimers) inhibits carrageenin-induced edema in a dose-dependent manner (after subcutaneous injection into rats). This is U1-pseudomyrmecitoxin-Pt1 subunit LS1 from Pseudomyrmex triplarinus (Ant).